Here is a 291-residue protein sequence, read N- to C-terminus: Pirin (291 aa).

Residues His56, His58, His101, and Glu103 each coordinate Fe cation.

It belongs to the pirin family. May interact with NF1/CTF1. Interacts with BCL3. Identified in a complex comprised of PIR, BLC3, NFKB1 and target DNA. Fe cation is required as a cofactor.

Its subcellular location is the nucleus. The protein localises to the cytoplasm. It catalyses the reaction quercetin + O2 = 2-(3,4-dihydroxybenzoyloxy)-4,6-dihydroxybenzoate + CO. Its pathway is flavonoid metabolism; quercetin degradation. Its function is as follows. Transcriptional coregulator of NF-kappa-B which facilitates binding of NF-kappa-B proteins to target kappa-B genes in a redox-state-dependent manner. May be required for efficient terminal myeloid maturation of hematopoietic cells. Has quercetin 2,3-dioxygenase activity (in vitro). The protein is Pirin (Pir) of Rattus norvegicus (Rat).